The sequence spans 253 residues: Ubiquinone/menaquinone biosynthesis C-methyltransferase UbiE (253 aa).

Residues threonine 76, aspartate 97, 125-126 (NA), and serine 142 each bind S-adenosyl-L-methionine.

This sequence belongs to the class I-like SAM-binding methyltransferase superfamily. MenG/UbiE family.

It catalyses the reaction a 2-demethylmenaquinol + S-adenosyl-L-methionine = a menaquinol + S-adenosyl-L-homocysteine + H(+). The catalysed reaction is a 2-methoxy-6-(all-trans-polyprenyl)benzene-1,4-diol + S-adenosyl-L-methionine = a 5-methoxy-2-methyl-3-(all-trans-polyprenyl)benzene-1,4-diol + S-adenosyl-L-homocysteine + H(+). The protein operates within quinol/quinone metabolism; menaquinone biosynthesis; menaquinol from 1,4-dihydroxy-2-naphthoate: step 2/2. It functions in the pathway cofactor biosynthesis; ubiquinone biosynthesis. In terms of biological role, methyltransferase required for the conversion of demethylmenaquinol (DMKH2) to menaquinol (MKH2) and the conversion of 2-polyprenyl-6-methoxy-1,4-benzoquinol (DDMQH2) to 2-polyprenyl-3-methyl-6-methoxy-1,4-benzoquinol (DMQH2). The polypeptide is Ubiquinone/menaquinone biosynthesis C-methyltransferase UbiE (Xanthomonas campestris pv. campestris (strain ATCC 33913 / DSM 3586 / NCPPB 528 / LMG 568 / P 25)).